Here is a 464-residue protein sequence, read N- to C-terminus: Argininosuccinate lyase (464 aa).

This sequence belongs to the lyase 1 family. Argininosuccinate lyase subfamily.

It localises to the cytoplasm. It carries out the reaction 2-(N(omega)-L-arginino)succinate = fumarate + L-arginine. Its pathway is amino-acid biosynthesis; L-arginine biosynthesis; L-arginine from L-ornithine and carbamoyl phosphate: step 3/3. In Pseudomonas paraeruginosa (strain DSM 24068 / PA7) (Pseudomonas aeruginosa (strain PA7)), this protein is Argininosuccinate lyase.